The following is a 185-amino-acid chain: Large ribosomal subunit protein uL5 (185 aa).

It belongs to the universal ribosomal protein uL5 family. In terms of assembly, part of the 50S ribosomal subunit; part of the 5S rRNA/L5/L18/L25 subcomplex. Contacts the 5S rRNA and the P site tRNA. Forms a bridge to the 30S subunit in the 70S ribosome.

In terms of biological role, this is one of the proteins that bind and probably mediate the attachment of the 5S RNA into the large ribosomal subunit, where it forms part of the central protuberance. In the 70S ribosome it contacts protein S13 of the 30S subunit (bridge B1b), connecting the 2 subunits; this bridge is implicated in subunit movement. Contacts the P site tRNA; the 5S rRNA and some of its associated proteins might help stabilize positioning of ribosome-bound tRNAs. The sequence is that of Large ribosomal subunit protein uL5 from Phocaeicola vulgatus (strain ATCC 8482 / DSM 1447 / JCM 5826 / CCUG 4940 / NBRC 14291 / NCTC 11154) (Bacteroides vulgatus).